We begin with the raw amino-acid sequence, 95 residues long: Large ribosomal subunit protein bL27 (95 aa).

Residues 1–9 (MLNMNLQFF) constitute a propeptide that is removed on maturation.

Belongs to the bacterial ribosomal protein bL27 family. The N-terminus is cleaved by ribosomal processing cysteine protease Prp.

The protein is Large ribosomal subunit protein bL27 of Agathobacter rectalis (strain ATCC 33656 / DSM 3377 / JCM 17463 / KCTC 5835 / VPI 0990) (Eubacterium rectale).